A 398-amino-acid chain; its full sequence is Acetate kinase (398 aa).

Asn8 is a Mg(2+) binding site. Position 15 (Lys15) interacts with ATP. Arg89 serves as a coordination point for substrate. The Proton donor/acceptor role is filled by Asp146. ATP is bound by residues 206-210 (HIGNG), 283-285 (DMR), and 331-335 (GMGEN). Glu383 serves as a coordination point for Mg(2+).

This sequence belongs to the acetokinase family. As to quaternary structure, homodimer. Mg(2+) serves as cofactor. Requires Mn(2+) as cofactor.

The protein resides in the cytoplasm. The enzyme catalyses acetate + ATP = acetyl phosphate + ADP. Its pathway is metabolic intermediate biosynthesis; acetyl-CoA biosynthesis; acetyl-CoA from acetate: step 1/2. In terms of biological role, catalyzes the formation of acetyl phosphate from acetate and ATP. Can also catalyze the reverse reaction. This chain is Acetate kinase, found in Streptococcus pyogenes serotype M12 (strain MGAS2096).